Here is a 211-residue protein sequence, read N- to C-terminus: Uracil phosphoribosyltransferase (211 aa).

Residues arginine 81, arginine 106, and 133–141 (DPMLATGNS) each bind 5-phospho-alpha-D-ribose 1-diphosphate. Uracil is bound by residues isoleucine 196 and 201–203 (GDA). Aspartate 202 lines the 5-phospho-alpha-D-ribose 1-diphosphate pocket.

This sequence belongs to the UPRTase family. Requires Mg(2+) as cofactor.

The catalysed reaction is UMP + diphosphate = 5-phospho-alpha-D-ribose 1-diphosphate + uracil. Its pathway is pyrimidine metabolism; UMP biosynthesis via salvage pathway; UMP from uracil: step 1/1. Allosterically activated by GTP. Functionally, catalyzes the conversion of uracil and 5-phospho-alpha-D-ribose 1-diphosphate (PRPP) to UMP and diphosphate. The chain is Uracil phosphoribosyltransferase from Paracoccus denitrificans (strain Pd 1222).